A 263-amino-acid polypeptide reads, in one-letter code: Thiazole synthase (263 aa).

The Schiff-base intermediate with DXP role is filled by lysine 100. Residues glycine 161, 188–189, and 210–211 contribute to the 1-deoxy-D-xylulose 5-phosphate site; these read AG and NS.

This sequence belongs to the ThiG family. Homotetramer. Forms heterodimers with either ThiH or ThiS.

The protein localises to the cytoplasm. It carries out the reaction [ThiS sulfur-carrier protein]-C-terminal-Gly-aminoethanethioate + 2-iminoacetate + 1-deoxy-D-xylulose 5-phosphate = [ThiS sulfur-carrier protein]-C-terminal Gly-Gly + 2-[(2R,5Z)-2-carboxy-4-methylthiazol-5(2H)-ylidene]ethyl phosphate + 2 H2O + H(+). Its pathway is cofactor biosynthesis; thiamine diphosphate biosynthesis. Its function is as follows. Catalyzes the rearrangement of 1-deoxy-D-xylulose 5-phosphate (DXP) to produce the thiazole phosphate moiety of thiamine. Sulfur is provided by the thiocarboxylate moiety of the carrier protein ThiS. In vitro, sulfur can be provided by H(2)S. This Pseudoalteromonas translucida (strain TAC 125) protein is Thiazole synthase.